We begin with the raw amino-acid sequence, 197 residues long: Transposon Tn10 TetC protein (197 aa).

Residues 12–72 (KSTYQSLVNS…ACYKQQLIMI (61 aa)) form the HTH tetR-type domain. Residues 35–54 (SIDEISGKALVTKGAFYHHF) constitute a DNA-binding region (H-T-H motif).

The protein is Transposon Tn10 TetC protein (tetC) of Escherichia coli.